The chain runs to 315 residues: Aspartate carbamoyltransferase catalytic subunit (315 aa).

Arg64 and Thr65 together coordinate carbamoyl phosphate. L-aspartate is bound at residue Lys92. Carbamoyl phosphate-binding residues include Arg114, His142, and Gln145. L-aspartate is bound by residues Arg175 and Arg229. Positions 270 and 271 each coordinate carbamoyl phosphate.

The protein belongs to the aspartate/ornithine carbamoyltransferase superfamily. ATCase family. Heterododecamer (2C3:3R2) of six catalytic PyrB chains organized as two trimers (C3), and six regulatory PyrI chains organized as three dimers (R2).

It carries out the reaction carbamoyl phosphate + L-aspartate = N-carbamoyl-L-aspartate + phosphate + H(+). Its pathway is pyrimidine metabolism; UMP biosynthesis via de novo pathway; (S)-dihydroorotate from bicarbonate: step 2/3. Catalyzes the condensation of carbamoyl phosphate and aspartate to form carbamoyl aspartate and inorganic phosphate, the committed step in the de novo pyrimidine nucleotide biosynthesis pathway. The chain is Aspartate carbamoyltransferase catalytic subunit from Methylorubrum extorquens (strain CM4 / NCIMB 13688) (Methylobacterium extorquens).